We begin with the raw amino-acid sequence, 434 residues long: UDP-N-acetylmuramate--L-alanine ligase (434 aa).

ATP is bound at residue G108–T114.

This sequence belongs to the MurCDEF family.

It is found in the cytoplasm. The enzyme catalyses UDP-N-acetyl-alpha-D-muramate + L-alanine + ATP = UDP-N-acetyl-alpha-D-muramoyl-L-alanine + ADP + phosphate + H(+). Its pathway is cell wall biogenesis; peptidoglycan biosynthesis. In terms of biological role, cell wall formation. This is UDP-N-acetylmuramate--L-alanine ligase from Geobacillus thermodenitrificans (strain NG80-2).